The chain runs to 141 residues: HTH-type transcriptional repressor NsrR (141 aa).

An HTH rrf2-type domain is found at glutamine 2–aspartate 129. Residues isoleucine 28–glutamine 51 constitute a DNA-binding region (H-T-H motif). [2Fe-2S] cluster contacts are provided by cysteine 91, cysteine 96, and cysteine 102.

[2Fe-2S] cluster is required as a cofactor.

Its function is as follows. Nitric oxide-sensitive repressor of genes involved in protecting the cell against nitrosative stress. May require iron for activity. In Vibrio vulnificus (strain CMCP6), this protein is HTH-type transcriptional repressor NsrR.